The following is a 764-amino-acid chain: 5-methyltetrahydropteroyltriglutamate--homocysteine methyltransferase (764 aa).

5-methyltetrahydropteroyltri-L-glutamate contacts are provided by residues 16-19 and Lys-117; that span reads RELK. L-homocysteine contacts are provided by residues 442–444 and Glu-495; that span reads IGS. L-methionine is bound by residues 442–444 and Glu-495; that span reads IGS. 5-methyltetrahydropteroyltri-L-glutamate is bound by residues 526 to 527 and Trp-572; that span reads RC. Residue Asp-610 coordinates L-homocysteine. An L-methionine-binding site is contributed by Asp-610. Glu-616 is a 5-methyltetrahydropteroyltri-L-glutamate binding site. Zn(2+)-binding residues include His-652, Cys-654, and Glu-676. His-705 acts as the Proton donor in catalysis. Cys-737 provides a ligand contact to Zn(2+).

The protein belongs to the vitamin-B12 independent methionine synthase family. Zn(2+) serves as cofactor.

The catalysed reaction is 5-methyltetrahydropteroyltri-L-glutamate + L-homocysteine = tetrahydropteroyltri-L-glutamate + L-methionine. It participates in amino-acid biosynthesis; L-methionine biosynthesis via de novo pathway; L-methionine from L-homocysteine (MetE route): step 1/1. Functionally, catalyzes the transfer of a methyl group from 5-methyltetrahydrofolate to homocysteine resulting in methionine formation. This is 5-methyltetrahydropteroyltriglutamate--homocysteine methyltransferase from Bordetella bronchiseptica (strain ATCC BAA-588 / NCTC 13252 / RB50) (Alcaligenes bronchisepticus).